We begin with the raw amino-acid sequence, 298 residues long: Cyanophycinase (298 aa).

Catalysis depends on charge relay system residues Ser155, Glu173, and His197.

It belongs to the peptidase S51 family.

It catalyses the reaction [L-4-(L-arginin-2-N-yl)aspartate](n) + H2O = [L-4-(L-arginin-2-N-yl)aspartate](n-1) + L-4-(L-arginin-2-N-yl)aspartate. In terms of biological role, exopeptidase that catalyzes the hydrolytic cleavage of multi-L-arginyl-poly-L-aspartic acid (cyanophycin; a water-insoluble reserve polymer) into aspartate-arginine dipeptides. This chain is Cyanophycinase (cphB), found in Trichormus variabilis (strain ATCC 29413 / PCC 7937) (Anabaena variabilis).